We begin with the raw amino-acid sequence, 126 residues long: Large ribosomal subunit protein bL12 (126 aa).

The protein belongs to the bacterial ribosomal protein bL12 family. As to quaternary structure, homodimer. Part of the ribosomal stalk of the 50S ribosomal subunit. Forms a multimeric L10(L12)X complex, where L10 forms an elongated spine to which 2 to 4 L12 dimers bind in a sequential fashion. Binds GTP-bound translation factors.

Forms part of the ribosomal stalk which helps the ribosome interact with GTP-bound translation factors. Is thus essential for accurate translation. In Corynebacterium diphtheriae (strain ATCC 700971 / NCTC 13129 / Biotype gravis), this protein is Large ribosomal subunit protein bL12.